The primary structure comprises 433 residues: Pseudopaline synthase (433 aa).

Residues 7 to 27 (SLGNVLLVGLGAVAIQVALDL) traverse the membrane as a helical segment. Residues 16-19 (LGAV), 39-40 (NH), and Thr154 each bind NAD(+). Residue His219 is the Proton donor/acceptor of the active site. Glu364 serves as a coordination point for NAD(+).

The protein belongs to the staphylopine dehydrogenase family. Homodimer. Interacts with CntL.

The protein localises to the cell membrane. The catalysed reaction is pseudopaline + NAD(+) + H2O = (2S)-2-amino-4-{[(1S)-1-carboxy-2-(1H-imidazol-4-yl)ethyl]amino}butanoate + 2-oxoglutarate + NADH + H(+). Catalyzes the NADH-dependent reductive condensation of alpha-ketoglutarate to the intermediate formed by the adjacently encoded enzyme CntL, namely (2S)-2-amino-4-{[(1S)-1-carboxy-2-(1H-imidazol-4-yl)ethyl]amino}butanoate, leading to the production of pseudopaline. This is the last step in the biosynthesis of the metallophore pseudopaline, which is involved in the acquisition of nickel and zinc, and thus enables bacterial growth inside the host, where metal access is limited. Therefore, this enzyme probably contributes to Pseudomonas virulence. Can use neither pyruvate nor NADPH in place of alpha-ketoglutarate and NADH, respectively. The chain is Pseudopaline synthase from Pseudomonas aeruginosa (strain UCBPP-PA14).